Reading from the N-terminus, the 324-residue chain is HPr kinase/phosphorylase (324 aa).

Active-site residues include H146 and K167. Position 161 to 168 (161 to 168 (GDSGLGKS)) interacts with ATP. Mg(2+) is bound at residue S168. D185 (proton acceptor; for phosphorylation activity. Proton donor; for dephosphorylation activity) is an active-site residue. The tract at residues 209-218 (LEVRGLGLLD) is important for the catalytic mechanism of both phosphorylation and dephosphorylation. A Mg(2+)-binding site is contributed by E210. R250 is an active-site residue. The tract at residues 271-276 (QVAAGR) is important for the catalytic mechanism of dephosphorylation.

Belongs to the HPrK/P family. As to quaternary structure, homohexamer. Mg(2+) serves as cofactor.

It carries out the reaction [HPr protein]-L-serine + ATP = [HPr protein]-O-phospho-L-serine + ADP + H(+). The catalysed reaction is [HPr protein]-O-phospho-L-serine + phosphate + H(+) = [HPr protein]-L-serine + diphosphate. In terms of biological role, catalyzes the ATP- as well as the pyrophosphate-dependent phosphorylation of a specific serine residue in HPr, a phosphocarrier protein of the phosphoenolpyruvate-dependent sugar phosphotransferase system (PTS). HprK/P also catalyzes the pyrophosphate-producing, inorganic phosphate-dependent dephosphorylation (phosphorolysis) of seryl-phosphorylated HPr (P-Ser-HPr). The chain is HPr kinase/phosphorylase from Ralstonia pickettii (strain 12J).